A 574-amino-acid chain; its full sequence is uncharacterized protein (574 aa).

11 helical membrane-spanning segments follow: residues 14–34, 54–74, 124–144, 205–225, 253–273, 323–343, 350–370, 403–423, 441–461, 485–505, and 520–540; these read FFPT…LFFG, VVPL…LGIV, WLMA…SDTA, ICKC…TGTI, SWMA…WFIV, LVIF…VIPG, KGYV…FIWP, FPWS…AVRV, MPFF…TEFS, PLYF…LPMA, and MIDM…ITAI. Asn-565 and Asn-569 each carry an N-linked (GlcNAc...) asparagine glycan.

Belongs to the SLC13A/DASS transporter (TC 2.A.47) family. NADC subfamily.

The protein resides in the membrane. This is an uncharacterized protein from Caenorhabditis elegans.